The primary structure comprises 245 residues: Ribonuclease PH (245 aa).

Phosphate-binding positions include R86 and 124-126 (GTR).

This sequence belongs to the RNase PH family. Homohexameric ring arranged as a trimer of dimers.

It catalyses the reaction tRNA(n+1) + phosphate = tRNA(n) + a ribonucleoside 5'-diphosphate. In terms of biological role, phosphorolytic 3'-5' exoribonuclease that plays an important role in tRNA 3'-end maturation. Removes nucleotide residues following the 3'-CCA terminus of tRNAs; can also add nucleotides to the ends of RNA molecules by using nucleoside diphosphates as substrates, but this may not be physiologically important. Probably plays a role in initiation of 16S rRNA degradation (leading to ribosome degradation) during starvation. This Bacillus cereus (strain G9842) protein is Ribonuclease PH.